We begin with the raw amino-acid sequence, 498 residues long: ATP synthase subunit beta, chloroplastic (498 aa).

172-179 (GGAGVGKT) lines the ATP pocket.

This sequence belongs to the ATPase alpha/beta chains family. F-type ATPases have 2 components, CF(1) - the catalytic core - and CF(0) - the membrane proton channel. CF(1) has five subunits: alpha(3), beta(3), gamma(1), delta(1), epsilon(1). CF(0) has four main subunits: a(1), b(1), b'(1) and c(9-12).

The protein localises to the plastid. Its subcellular location is the chloroplast thylakoid membrane. It catalyses the reaction ATP + H2O + 4 H(+)(in) = ADP + phosphate + 5 H(+)(out). In terms of biological role, produces ATP from ADP in the presence of a proton gradient across the membrane. The catalytic sites are hosted primarily by the beta subunits. The polypeptide is ATP synthase subunit beta, chloroplastic (Whiteheadia bifolia (Elephants ears)).